A 1081-amino-acid chain; its full sequence is Cellulose synthase A catalytic subunit 1 [UDP-forming] (1081 aa).

An N-acetylmethionine modification is found at Met-1. Residues 1 to 270 lie on the Cytoplasmic side of the membrane; sequence MEASAGLVAG…SRVVPIPSSR (270 aa). Zn(2+) contacts are provided by Cys-39, Cys-42, Cys-58, Cys-61, Cys-66, Cys-69, Cys-81, and Cys-84. The RING-type; degenerate zinc-finger motif lies at 39–85; the sequence is CQICGDDVGLAETGDVFVACNECAFPVCRPCYEYERKDGTQCCPQCK. The tract at residues 118–195 is disordered; sequence GANKARHQRH…RQPVPVRIVD (78 aa). A compositionally biased stretch (basic and acidic residues) spans 127 to 139; it reads HGEEFSSSSRHES. The segment covering 158 to 168 has biased composition (polar residues); the sequence is PDTQSVRTTSG. A helical transmembrane segment spans residues 271–291; sequence LTPYRVVIILRLIILCFFLQY. Over 292 to 299 the chain is Extracellular; that stretch reads RTTHPVKN. A helical membrane pass occupies residues 300–320; it reads AYPLWLTSVICEIWFAFSWLL. The Cytoplasmic segment spans residues 321 to 856; it reads DQFPKWYPIN…LLERIAYINT (536 aa). The UDP-alpha-D-glucose site is built by Ser-359, Lys-365, Glu-366, and Asp-395. Residue Asp-395 is part of the active site. Residues 449–476 are a coiled coil; that stretch reads VKERRAMKREYEEFKVRINALVAKAQKI. UDP-alpha-D-glucose is bound at residue Lys-536. Mn(2+) contacts are provided by Lys-537 and Asp-561. Residue Asp-780 is part of the active site. Residues 857–877 form a helical membrane-spanning segment; sequence IVYPITSIPLIAYCILPAFCL. Residues 878–889 lie on the Extracellular side of the membrane; the sequence is ITDRFIIPEISN. The chain crosses the membrane as a helical span at residues 890-910; sequence YASIWFILLFISIAVTGILEL. At 911–925 the chain is on the cytoplasmic side; it reads RWSGVSIEDWWRNEQ. A helical membrane pass occupies residues 926-946; that stretch reads FWVIGGTSAHLFAVFQGLLKV. Over 947–976 the chain is Extracellular; the sequence is LAGIDTNFTVTSKATDEDGDFAELYIFKWT. An N-linked (GlcNAc...) asparagine glycan is attached at Asn-953. The helical transmembrane segment at 977-997 threads the bilayer; that stretch reads ALLIPPTTVLLVNLIGIVAGV. Topologically, residues 998-1008 are cytoplasmic; the sequence is SYAVNSGYQSW. Residues 1009–1029 traverse the membrane as a helical segment; it reads GPLFGKLFFALWVIAHLYPFL. Over 1030–1038 the chain is Extracellular; that stretch reads KGLLGRQNR. A helical membrane pass occupies residues 1039–1059; sequence TPTIVIVWSVLLASIFSLLWV. Residues 1060-1081 are Cytoplasmic-facing; it reads RINPFVDANPNANNFNGKGGVF.

This sequence belongs to the glycosyltransferase 2 family. Plant cellulose synthase subfamily. As to quaternary structure, interacts with CESA3 and CESA6. Assembly with CESA3 and CESA6 is required for functional complex in primary cell wall cellulose synthesis. Interacts with STL1 and STL2, but not with GOT1. Binds to CSI1. Interacts with PAT24/TIP1. Requires Zn(2+) as cofactor. It depends on Mn(2+) as a cofactor. Post-translationally, S-acylated. Expressed in germinating seeds, seedlings, roots, stems, shoots leaves and flowers, but not in mature flowers.

It localises to the cell membrane. The catalysed reaction is [(1-&gt;4)-beta-D-glucosyl](n) + UDP-alpha-D-glucose = [(1-&gt;4)-beta-D-glucosyl](n+1) + UDP + H(+). Its pathway is glycan metabolism; plant cellulose biosynthesis. Functionally, catalytic subunit of cellulose synthase terminal complexes ('rosettes'), required for beta-1,4-glucan microfibril crystallization, a major mechanism of the cell wall formation. Involved in the primary cell wall formation. Required during embryogenesis for cell elongation, orientation of cell expansion and complex cell wall formations, such as interdigitated pattern of epidermal pavement cells, stomatal guard cells and trichomes. Plays a role in lateral roots formation, but seems not necessary for the development of tip-growing cells such as root hairs. The presence of each protein CESA1 and CESA6 is critical for cell expansion after germination. In Arabidopsis thaliana (Mouse-ear cress), this protein is Cellulose synthase A catalytic subunit 1 [UDP-forming].